The chain runs to 644 residues: Threonine--tRNA ligase (644 aa).

Residues 1–62 enclose the TGS domain; sequence MSFSVTLPDG…DSDVEIAIIT (62 aa). The interval 240-538 is catalytic; the sequence is DHRTIGRDLD…LTEIYKGAFP (299 aa). Residues Cys334, His385, and His515 each contribute to the Zn(2+) site.

The protein belongs to the class-II aminoacyl-tRNA synthetase family. As to quaternary structure, homodimer. Zn(2+) serves as cofactor.

Its subcellular location is the cytoplasm. It catalyses the reaction tRNA(Thr) + L-threonine + ATP = L-threonyl-tRNA(Thr) + AMP + diphosphate + H(+). Functionally, catalyzes the attachment of threonine to tRNA(Thr) in a two-step reaction: L-threonine is first activated by ATP to form Thr-AMP and then transferred to the acceptor end of tRNA(Thr). Also edits incorrectly charged L-seryl-tRNA(Thr). This is Threonine--tRNA ligase from Lactobacillus acidophilus (strain ATCC 700396 / NCK56 / N2 / NCFM).